The primary structure comprises 313 residues: Ribosomal RNA small subunit methyltransferase H (313 aa).

S-adenosyl-L-methionine contacts are provided by residues 34 to 36 (GGH), Asp-53, Phe-80, Asp-101, and Gln-108.

It belongs to the methyltransferase superfamily. RsmH family.

It localises to the cytoplasm. It carries out the reaction cytidine(1402) in 16S rRNA + S-adenosyl-L-methionine = N(4)-methylcytidine(1402) in 16S rRNA + S-adenosyl-L-homocysteine + H(+). Specifically methylates the N4 position of cytidine in position 1402 (C1402) of 16S rRNA. The chain is Ribosomal RNA small subunit methyltransferase H from Lacticaseibacillus paracasei (strain ATCC 334 / BCRC 17002 / CCUG 31169 / CIP 107868 / KCTC 3260 / NRRL B-441) (Lactobacillus paracasei).